The following is a 173-amino-acid chain: DRBM domain-containing protein 340R (173 aa).

Residues 30 to 102 (NSIGFLNEFC…AFKTIKELNL (73 aa)) enclose the DRBM domain.

In Invertebrate iridescent virus 6 (IIV-6), this protein is DRBM domain-containing protein 340R.